The chain runs to 121 residues: Flagellar hook-basal body complex protein FliE (121 aa).

It belongs to the FliE family.

It localises to the bacterial flagellum basal body. This Treponema denticola (strain ATCC 35405 / DSM 14222 / CIP 103919 / JCM 8153 / KCTC 15104) protein is Flagellar hook-basal body complex protein FliE.